Consider the following 378-residue polypeptide: Sperm microtubule associated protein 2 (378 aa).

Disordered regions lie at residues 1–35 (MGEL…SDGS) and 47–79 (WLQS…LPEV). Over residues 47–56 (WLQSSQATTE) the composition is skewed to polar residues. Positions 61–77 (DPEEEIPPEEMVGEELP) are enriched in acidic residues. THEG repeat units follow at residues 113 to 132 (AKCR…PKFN), 179 to 198 (TITV…PKRF), 217 to 236 (STLE…PKIR), 253 to 272 (AAQM…PRAP), 285 to 304 (PKPY…PKAL), 321 to 340 (VTKN…PKIR), and 355 to 374 (ASLV…PKHI). Serine 290 carries the post-translational modification Phosphoserine.

As to quaternary structure, interacts with CCT5.

Its subcellular location is the nucleus. Its function is as follows. May be involved (but not essential) in spermatogenesis. This Rattus norvegicus (Rat) protein is Sperm microtubule associated protein 2.